The following is a 623-amino-acid chain: MVSSDFENEKQPDVVQVLTDEKNISLDDKYDYEDPKNYSTNYVDDYNPKGLRRPTPQESKSLRRVIGNIRYSTFMLCICEFAERASYYSTTGILTNYIQRRIDPDSPHGWGAPPPGSPDASAGALGKGLQAASALTNLLTFLAYVFPLIGGYLGDSTIGRWKAIQWGVFFGFVAHLFFIFASIPQAIENANAGLGLCVIAIITLSAGSGLMKPNLLPLVLDQYPEERDMVKVLPTGESIILDREKSLSRITNVFYLAINIGAFLQIATSYCERRVGFWLAFFVPMILYIIVPIFLFIVKPKLKIKPPQGQVMTNVVKILAVLFSGNFIKRLWNGTFWDHARPSHMEARGTIYYNSKKKSAITWSDQWILDIKQTFDSCKIFLYYIIFNLADSGLGSVETSLIGAMKLDGVPNDLFNNFNPLTIIILIPILEYGLYPLLNKFKIDFKPIWRICFGFVVCSFSQIAGFVLQKQVYEQSPCGYYATNCDSPAPITAWKASSLFILAAAGECWAYTTAYELAYTRSPPALKSLVYALFLVMSAFSAALSLAITPALKDPNLHWVFLAIGLAGFLCAIVMLAQFWNLDKWMENETNERERLDREEEEEANRGIHDVDHPIEAIVSIKS.

2 disordered regions span residues 1 to 20 (MVSSDFENEKQPDVVQVLTD) and 31 to 58 (DYEDPKNYSTNYVDDYNPKGLRRPTPQE). 11 helical membrane-spanning segments follow: residues 134-154 (ALTNLLTFLAYVFPLIGGYLG), 163-183 (AIQWGVFFGFVAHLFFIFASI), 191-211 (NAGLGLCVIAIITLSAGSGLM), 250-270 (ITNVFYLAINIGAFLQIATSY), 277-297 (FWLAFFVPMILYIIVPIFLFI), 385-405 (IIFNLADSGLGSVETSLIGAM), 418-438 (FNPLTIIILIPILEYGLYPLL), 448-468 (IWRICFGFVVCSFSQIAGFVL), 499-519 (LFILAAAGECWAYTTAYELAY), 529-549 (LVYALFLVMSAFSAALSLAIT), and 557-577 (LHWVFLAIGLAGFLCAIVMLA).

It belongs to the major facilitator superfamily. Proton-dependent oligopeptide transporter (POT/PTR) (TC 2.A.17) family.

Its subcellular location is the membrane. Functionally, uptake of small peptides. The polypeptide is Peptide transporter PTR2 (PTR2) (Candida albicans (Yeast)).